Reading from the N-terminus, the 393-residue chain is Formate-dependent phosphoribosylglycinamide formyltransferase (393 aa).

N(1)-(5-phospho-beta-D-ribosyl)glycinamide-binding positions include 20 to 21 and E80; that span reads EL. Residues R112, K153, 158–163, 193–196, and E201 each bind ATP; these read SSGKGQ and EAFI. The 190-residue stretch at 117-306 folds into the ATP-grasp domain; the sequence is RLAAEDLNLP…EFELHVRAVL (190 aa). Mg(2+) contacts are provided by E265 and E277. N(1)-(5-phospho-beta-D-ribosyl)glycinamide contacts are provided by residues D284, K354, and 361–362; that span reads RR.

The protein belongs to the PurK/PurT family. Homodimer.

It catalyses the reaction N(1)-(5-phospho-beta-D-ribosyl)glycinamide + formate + ATP = N(2)-formyl-N(1)-(5-phospho-beta-D-ribosyl)glycinamide + ADP + phosphate + H(+). Its pathway is purine metabolism; IMP biosynthesis via de novo pathway; N(2)-formyl-N(1)-(5-phospho-D-ribosyl)glycinamide from N(1)-(5-phospho-D-ribosyl)glycinamide (formate route): step 1/1. In terms of biological role, involved in the de novo purine biosynthesis. Catalyzes the transfer of formate to 5-phospho-ribosyl-glycinamide (GAR), producing 5-phospho-ribosyl-N-formylglycinamide (FGAR). Formate is provided by PurU via hydrolysis of 10-formyl-tetrahydrofolate. In Syntrophotalea carbinolica (strain DSM 2380 / NBRC 103641 / GraBd1) (Pelobacter carbinolicus), this protein is Formate-dependent phosphoribosylglycinamide formyltransferase.